Here is a 206-residue protein sequence, read N- to C-terminus: Probable N-acetyltransferase 14 (206 aa).

One can recognise an N-acetyltransferase domain in the interval 55 to 206 (LRFVLASFAL…TLVREFSKDL (152 aa)). Residues 57–77 (FVLASFALALLLPVFLAVTAV) traverse the membrane as a helical segment.

This sequence belongs to the camello family.

It is found in the membrane. Its function is as follows. Probable acetyltransferase. May act as a transcription factor regulating the expression of coproporphyrinogen oxidase by binding to a promoter regulatory element. This is Probable N-acetyltransferase 14 (NAT14) from Macaca fascicularis (Crab-eating macaque).